A 124-amino-acid chain; its full sequence is Glycine cleavage system H protein (124 aa).

One can recognise a Lipoyl-binding domain in the interval 19–101 (TGTVGITDYA…AGKGWFLQIK (83 aa)). At Lys60 the chain carries N6-lipoyllysine.

Belongs to the GcvH family. In terms of assembly, the glycine cleavage system is composed of four proteins: P, T, L and H. (R)-lipoate is required as a cofactor.

In terms of biological role, the glycine cleavage system catalyzes the degradation of glycine. The H protein shuttles the methylamine group of glycine from the P protein to the T protein. This Beijerinckia indica subsp. indica (strain ATCC 9039 / DSM 1715 / NCIMB 8712) protein is Glycine cleavage system H protein.